The sequence spans 418 residues: UDP-N-acetylglucosamine 1-carboxyvinyltransferase (418 aa).

A phosphoenolpyruvate-binding site is contributed by 22-23 (KN). Residue Arg92 participates in UDP-N-acetyl-alpha-D-glucosamine binding. Cys116 acts as the Proton donor in catalysis. 2-(S-cysteinyl)pyruvic acid O-phosphothioketal is present on Cys116. Residues 121 to 125 (RPVDQ), Asp306, and Ile328 contribute to the UDP-N-acetyl-alpha-D-glucosamine site.

Belongs to the EPSP synthase family. MurA subfamily.

The protein resides in the cytoplasm. It carries out the reaction phosphoenolpyruvate + UDP-N-acetyl-alpha-D-glucosamine = UDP-N-acetyl-3-O-(1-carboxyvinyl)-alpha-D-glucosamine + phosphate. It participates in cell wall biogenesis; peptidoglycan biosynthesis. Its function is as follows. Cell wall formation. Adds enolpyruvyl to UDP-N-acetylglucosamine. This Acinetobacter baylyi (strain ATCC 33305 / BD413 / ADP1) protein is UDP-N-acetylglucosamine 1-carboxyvinyltransferase.